A 102-amino-acid polypeptide reads, in one-letter code: Peptide chaperone MftB (102 aa).

The protein belongs to the peptide chaperone MftB family.

In terms of biological role, peptide chaperone involved in the biosynthesis of the enzyme cofactor mycofactocin (MFT). Binds MftA and MftC with high affinity, and is essential for MftC activity on MftA, likely via the formation of a ternary complex. Is required for the in vivo ethanol assimilation in M.smegmatis. The chain is Peptide chaperone MftB from Mycolicibacterium smegmatis (strain ATCC 700084 / mc(2)155) (Mycobacterium smegmatis).